Here is a 105-residue protein sequence, read N- to C-terminus: Large ribosomal subunit protein uL24 (105 aa).

Belongs to the universal ribosomal protein uL24 family. As to quaternary structure, part of the 50S ribosomal subunit.

Its function is as follows. One of two assembly initiator proteins, it binds directly to the 5'-end of the 23S rRNA, where it nucleates assembly of the 50S subunit. One of the proteins that surrounds the polypeptide exit tunnel on the outside of the subunit. This Aeromonas hydrophila subsp. hydrophila (strain ATCC 7966 / DSM 30187 / BCRC 13018 / CCUG 14551 / JCM 1027 / KCTC 2358 / NCIMB 9240 / NCTC 8049) protein is Large ribosomal subunit protein uL24.